The chain runs to 163 residues: Phosphopantetheine adenylyltransferase (163 aa).

S8 is a substrate binding site. ATP contacts are provided by residues 8 to 9 and H16; that span reads SF. Residues K40, T72, and R86 each contribute to the substrate site. Residues 87 to 89, E97, and 122 to 128 contribute to the ATP site; these read GLR and HSFLSSS.

Belongs to the bacterial CoaD family. As to quaternary structure, homohexamer. Requires Mg(2+) as cofactor.

Its subcellular location is the cytoplasm. It catalyses the reaction (R)-4'-phosphopantetheine + ATP + H(+) = 3'-dephospho-CoA + diphosphate. The protein operates within cofactor biosynthesis; coenzyme A biosynthesis; CoA from (R)-pantothenate: step 4/5. In terms of biological role, reversibly transfers an adenylyl group from ATP to 4'-phosphopantetheine, yielding dephospho-CoA (dPCoA) and pyrophosphate. This is Phosphopantetheine adenylyltransferase from Synechococcus sp. (strain CC9902).